We begin with the raw amino-acid sequence, 136 residues long: Nucleoside diphosphate kinase (136 aa).

Positions 10, 58, 86, 92, 104, and 114 each coordinate ATP. Residue His117 is the Pros-phosphohistidine intermediate of the active site.

Belongs to the NDK family. In terms of assembly, homotetramer. Mg(2+) serves as cofactor.

The protein resides in the cytoplasm. The catalysed reaction is a 2'-deoxyribonucleoside 5'-diphosphate + ATP = a 2'-deoxyribonucleoside 5'-triphosphate + ADP. It catalyses the reaction a ribonucleoside 5'-diphosphate + ATP = a ribonucleoside 5'-triphosphate + ADP. In terms of biological role, major role in the synthesis of nucleoside triphosphates other than ATP. The ATP gamma phosphate is transferred to the NDP beta phosphate via a ping-pong mechanism, using a phosphorylated active-site intermediate. The chain is Nucleoside diphosphate kinase from Mycobacteroides abscessus (strain ATCC 19977 / DSM 44196 / CCUG 20993 / CIP 104536 / JCM 13569 / NCTC 13031 / TMC 1543 / L948) (Mycobacterium abscessus).